A 386-amino-acid polypeptide reads, in one-letter code: GTPase Obg (386 aa).

Residues 1–159 (MKFVDEASIL…RELLLELMLL (159 aa)) enclose the Obg domain. The segment at 127-147 (NTRFKSSVNRTPRQKTNGTPG) is disordered. The segment covering 129–145 (RFKSSVNRTPRQKTNGT) has biased composition (polar residues). One can recognise an OBG-type G domain in the interval 160–333 (ADVGMLGMPN…LCWDVMTFII (174 aa)). Residues 166–173 (GMPNAGKS), 191–195 (FTTLV), 213–216 (DIPG), 283–286 (NKID), and 314–316 (SAA) each bind GTP. The Mg(2+) site is built by Ser-173 and Thr-193.

This sequence belongs to the TRAFAC class OBG-HflX-like GTPase superfamily. OBG GTPase family. Monomer. Mg(2+) is required as a cofactor.

Its subcellular location is the cytoplasm. An essential GTPase which binds GTP, GDP and possibly (p)ppGpp with moderate affinity, with high nucleotide exchange rates and a fairly low GTP hydrolysis rate. Plays a role in control of the cell cycle, stress response, ribosome biogenesis and in those bacteria that undergo differentiation, in morphogenesis control. In Escherichia coli (strain UTI89 / UPEC), this protein is GTPase Obg.